The primary structure comprises 943 residues: Isoleucine--tRNA ligase (943 aa).

Positions 59–69 (PYANGQIHLGH) match the 'HIGH' region motif. An L-isoleucyl-5'-AMP-binding site is contributed by Glu-577. The 'KMSKS' region signature appears at 618–622 (KMSKS). Lys-621 is a binding site for ATP. The Zn(2+) site is built by Cys-906, Cys-909, Cys-926, and Cys-929.

It belongs to the class-I aminoacyl-tRNA synthetase family. IleS type 1 subfamily. As to quaternary structure, monomer. Zn(2+) serves as cofactor.

It is found in the cytoplasm. The enzyme catalyses tRNA(Ile) + L-isoleucine + ATP = L-isoleucyl-tRNA(Ile) + AMP + diphosphate. Functionally, catalyzes the attachment of isoleucine to tRNA(Ile). As IleRS can inadvertently accommodate and process structurally similar amino acids such as valine, to avoid such errors it has two additional distinct tRNA(Ile)-dependent editing activities. One activity is designated as 'pretransfer' editing and involves the hydrolysis of activated Val-AMP. The other activity is designated 'posttransfer' editing and involves deacylation of mischarged Val-tRNA(Ile). The polypeptide is Isoleucine--tRNA ligase (Xanthomonas axonopodis pv. citri (strain 306)).